A 1985-amino-acid polypeptide reads, in one-letter code: Voltage-dependent L-type calcium channel subunit alpha-1F (1985 aa).

Residues 1–11 (MSESEVGKDTT) are compositionally biased toward basic and acidic residues. Residues 1–56 (MSESEVGKDTTPEPSPANGTGPGPEWGLCPGPPTVGTDTSGASGLGTPRRRTQHNK) form a disordered region. At 1–92 (MSESEVGKDT…RSCISIVEWK (92 aa)) the chain is on the cytoplasmic side. The I repeat unit spans residues 79–375 (NPIRRSCISI…LVLGVLSGEF (297 aa)). A helical transmembrane segment spans residues 93–111 (PFDILILLTIFANCVALGV). The Extracellular segment spans residues 112-129 (YIPFPEDDSNTANHNLEQ). Residues 130 to 149 (VEYVFLVIFTVETVLKIVAY) traverse the membrane as a helical segment. Topologically, residues 150–161 (GLVLHPSAYIRN) are cytoplasmic. Residues 162 to 180 (GWNLLDFIIVVVGLFSVLL) form a helical membrane-spanning segment. Residues 181–201 (EQGPGRPGDAPHTGGKPGGFD) lie on the Extracellular side of the membrane. Residues 202–220 (VKALRAFRVLRPLRLVSGV) traverse the membrane as a helical segment. Topologically, residues 221–239 (PSLHIVVNSIMKALVPLLH) are cytoplasmic. The helical transmembrane segment at 240–259 (IALLVLFVIIIYAIIGLELF) threads the bilayer. Over 260-347 (LGRMHKTCYF…WMQDAMGYEL (88 aa)) the chain is Extracellular. A glycan (N-linked (GlcNAc...) asparagine) is linked at N295. E330 lines the Ca(2+) pocket. The chain crosses the membrane as a helical span at residues 348 to 372 (PWVYFVSLVIFGSFFVLNLVLGVLS). At 373–529 (GEFSKEREKA…ARCRRAVKSN (157 aa)) the chain is on the cytoplasmic side. The tract at residues 395-412 (QQMEEDLRGYLDWITQAE) is binding to the beta subunit. The segment covering 455-469 (SHSTRSTHSTSSHAS) has biased composition (low complexity). The disordered stretch occupies residues 455 to 490 (SHSTRSTHSTSSHASLPASDTGSMTDTPGDEDEEEG). The stretch at 515–761 (NRGLRARCRR…VFLAIAVDNL (247 aa)) is one II repeat. Residues 530-549 (ACYWAVLLLVFLNTLTIASE) form a helical membrane-spanning segment. Over 550 to 564 (HHGQPLWLTQTQEYA) the chain is Extracellular. Residues 565–583 (NKVLLCLFTVEMLLKLYGL) form a helical membrane-spanning segment. The Cytoplasmic portion of the chain corresponds to 584–591 (GPSVYVAS). The chain crosses the membrane as a helical span at residues 592 to 610 (FFNRFDCFVVCGGILETTL). Over 611 to 620 (VEVGAMQPLG) the chain is Extracellular. Residues 621–639 (ISVLRCVRLLRIFKVTRHW) traverse the membrane as a helical segment. Residues 640–658 (ASLSNLVASLLNSMKSIAS) are Cytoplasmic-facing. A helical membrane pass occupies residues 659 to 679 (LLLLLFLFIIIFSLLGMQLFG). Topologically, residues 680–733 (GKFNFDQTHTKRSTFDTFPQALLTVFQILTGEDWNVVMYDGIMAYGGPFFPGML) are extracellular. Ca(2+) is bound at residue E711. The chain crosses the membrane as a helical span at residues 734 to 758 (VCVYFIILFICGNYILLNVFLAIAV). The Cytoplasmic segment spans residues 759–876 (DNLASGDAGT…KACHTLIHHH (118 aa)). A disordered region spans residues 766–834 (AGTAKDKGRE…EEEEENGAGH (69 aa)). Residues 768–787 (TAKDKGREKSSEGNPPKENK) show a composition bias toward basic and acidic residues. Acidic residues predominate over residues 810–830 (MEEEEEEEEEEEEEEEEEEEN). The III repeat unit spans residues 858-1140 (CLSQTNPLRK…FFMMNIFVGF (283 aa)). The helical transmembrane segment at 877–895 (IFTSLILVFIILSSVSLAA) threads the bilayer. Topologically, residues 896-911 (EDPIRAHSFRNHILGY) are extracellular. Residues 912–931 (FDYAFTSIFTVEILLKMTVF) form a helical membrane-spanning segment. Residues 932-943 (GAFLHRGSFCRS) lie on the Cytoplasmic side of the membrane. A helical transmembrane segment spans residues 944-962 (WFNLLDLLVVSVSLISFGI). Over 963–968 (HSSAIS) the chain is Extracellular. The chain crosses the membrane as a helical span at residues 969 to 988 (VVKILRVLRVLRPLRAINRA). Residues 989 to 1007 (KGLKHVVQCVFVAIRTIGN) are Cytoplasmic-facing. Residues 1008-1027 (IMIVTTLLQFMFACIGVQLF) form a helical membrane-spanning segment. Residues 1028–1117 (KGKFYSCTDE…EGPIYNYHVE (90 aa)) lie on the Extracellular side of the membrane. The tract at residues 1065–1155 (RLWVNSDFNF…RAQGEQEYQN (91 aa)) is dihydropyridine binding. E1091 contacts Ca(2+). Residues 1118 to 1138 (ISVFFIVYIIIIAFFMMNIFV) traverse the membrane as a helical segment. Over 1139–1195 (GFVIITFRAQGEQEYQNCELDKNQRQCVEYALKAQPLRRYIPKNPHQYRVWATVNSR) the chain is Cytoplasmic. Residues 1182–1449 (NPHQYRVWAT…LFVAVIMDNF (268 aa)) form an IV repeat. Residues 1196–1214 (AFEYLMFLLILLNTVALAM) form a helical membrane-spanning segment. Residues 1215–1229 (QHYEQTAPFNYAMDI) are Extracellular-facing. Residues 1230 to 1249 (LNMVFTGLFTIEMVLKIIAF) traverse the membrane as a helical segment. The Cytoplasmic portion of the chain corresponds to 1250-1256 (KPKHYFA). Residues 1257–1278 (DAWNTFDALIVVGSVVDIAVTE) form a helical membrane-spanning segment. Residues 1279–1295 (VNNGGHLGESSEDTSRI) are Extracellular-facing. A helical transmembrane segment spans residues 1296 to 1315 (SITFFRLFRVMRLVKLLSKG). Topologically, residues 1316–1334 (EGIRTLLWTFIKSFQALPY) are cytoplasmic. A helical membrane pass occupies residues 1335-1354 (VALLIAMIFFIYAVIGMQMF). Residues 1355–1421 (GLVALQDGTQ…GEEFTCGSSF (67 aa)) lie on the Extracellular side of the membrane. The interval 1402–1468 (RCDPESDFGP…LGPHHLDEFK (67 aa)) is dihydropyridine binding. Positions 1414-1457 (EFTCGSSFAIVYFISFFMLCAFLIINLFVAVIMDNFDYLTRDWS) are phenylalkylamine binding. A helical transmembrane segment spans residues 1422 to 1446 (AIVYFISFFMLCAFLIINLFVAVIM). Residues 1447–1982 (DNFDYLTRDW…EDLGDEMACV (536 aa)) are Cytoplasmic-facing. 2 disordered regions span residues 1643 to 1729 (VTEE…PHRR) and 1746 to 1778 (LKGTQGQDNQNEEQELPDWTPDLDRAGRDSFEP). Residues 1644 to 1665 (TEEEEEEEEAVGQEAEEEEAEN) show a composition bias toward acidic residues. Composition is skewed to polar residues over residues 1675–1687 (DSQPQSRWNSRIS) and 1713–1724 (NSRQPSVIQAGS). Basic and acidic residues predominate over residues 1767–1776 (DLDRAGRDSF).

Belongs to the calcium channel alpha-1 subunit (TC 1.A.1.11) family. CACNA1F subfamily. Voltage-dependent calcium channels are multisubunit complexes, consisting of alpha-1, alpha-2, beta and delta subunits in a 1:1:1:1 ratio. The channel activity is directed by the pore-forming and voltage-sensitive alpha-1 subunit. In many cases, this subunit is sufficient to generate voltage-sensitive calcium channel activity. The auxiliary subunits beta and alpha-2/delta linked by a disulfide bridge regulate the channel activity. Interacts (via IQ domain) with CABP4; in a calcium independent manner. As to expression, expressed in the inner and outer nuclear layers and the genglion cell layer of the retina.

It is found in the membrane. It carries out the reaction Ca(2+)(in) = Ca(2+)(out). Its function is as follows. Voltage-sensitive calcium channels (VSCC) mediate the entry of calcium ions into excitable cells and are also involved in a variety of calcium-dependent processes, including muscle contraction, hormone or neurotransmitter release, gene expression, cell motility, cell division and cell death. The isoform alpha-1F gives rise to L-type calcium currents. Long-lasting (L-type) calcium channels belong to the 'high-voltage activated' (HVA) group. They are blocked by dihydropyridines (DHP), phenylalkylamines, and by benzothiazepines. Activates at more negative voltages and does not undergo calcium-dependent inactivation (CDI), due to incoming calcium ions, during depolarization. The polypeptide is Voltage-dependent L-type calcium channel subunit alpha-1F (Mus musculus (Mouse)).